The chain runs to 541 residues: Chloride channel CLIC-like protein 1 (541 aa).

An N-terminal signal peptide occupies residues 1-18 (MLCSLLLCGCLLLITGYA). Topologically, residues 19–184 (HDDDWIDPTD…EDYFGVDPYN (166 aa)) are lumenal. The chain crosses the membrane as a helical span at residues 185-205 (VFMVLLCLLCIVALVATELWT). The Cytoplasmic portion of the chain corresponds to 206 to 217 (YVRWHTQLKRVC). A helical transmembrane segment spans residues 218–238 (IISFLVSLGWNWIYLYKVAFA). Topologically, residues 239–329 (QHQANVAKMA…GEFIKALMKE (91 aa)) are lumenal. The chain crosses the membrane as a helical span at residues 330–350 (IPVLLQIPVLVILALAVLGFC). Over 351–541 (YGAGQSVPML…GTDPVSSPCG (191 aa)) the chain is Cytoplasmic. Residues 362–381 (HFRGPEREPPRALEPDDRRR) form a disordered region. Positions 364–381 (RGPEREPPRALEPDDRRR) are enriched in basic and acidic residues. 2 positions are modified to phosphoserine: serine 434 and serine 438. Position 482 is a phosphothreonine (threonine 482). Phosphoserine is present on serine 504. Residues 511–522 (QLKTDSECRPHS) show a composition bias toward basic and acidic residues. Residues 511 to 541 (QLKTDSECRPHSTEAAAAAARGTDPVSSPCG) form a disordered region.

The protein belongs to the chloride channel MCLC family. As to quaternary structure, homomultimers. Interacts with mitochondrial protein PIGBOS1 (via C-terminus); the interaction occurs at the mitochondria-associated endoplasmic reticulum (ER) membrane, a zone of contact between the ER and mitochondrial membranes, but does not appear to play a role in ER-mitochondria tethering and is not affected by ER stress. Interacts with CALR. In terms of tissue distribution, expressed in testis (spermatocytes), liver and lung (at protein level). Expressed in spleen, liver, testis, kidney, heart, brain and lung.

The protein resides in the endoplasmic reticulum membrane. The catalysed reaction is chloride(in) = chloride(out). It carries out the reaction bromide(in) = bromide(out). It catalyses the reaction nitrate(in) = nitrate(out). The enzyme catalyses fluoride(in) = fluoride(out). In terms of biological role, anion-selective channel with Ca(2+)-dependent and voltage-independent gating. Permeable to small monovalent anions with selectivity for bromide &gt; chloride &gt; nitrate &gt; fluoride. Operates in the endoplasmic reticulum (ER) membrane where it mediates chloride efflux to compensate for the loss of positive charges from the ER lumen upon Ca(2+) release. Contributes to the maintenance of ER Ca(2+) pools and activation of unfolded protein response to prevent accumulation of misfolded proteins in the ER lumen. Particularly involved in ER homeostasis mechanisms underlying motor neurons and retinal photoreceptors survival. This Rattus norvegicus (Rat) protein is Chloride channel CLIC-like protein 1.